The primary structure comprises 365 residues: Histidinol-phosphate aminotransferase (365 aa).

N6-(pyridoxal phosphate)lysine is present on Lys222.

It belongs to the class-II pyridoxal-phosphate-dependent aminotransferase family. Histidinol-phosphate aminotransferase subfamily. Homodimer. It depends on pyridoxal 5'-phosphate as a cofactor.

The catalysed reaction is L-histidinol phosphate + 2-oxoglutarate = 3-(imidazol-4-yl)-2-oxopropyl phosphate + L-glutamate. It participates in amino-acid biosynthesis; L-histidine biosynthesis; L-histidine from 5-phospho-alpha-D-ribose 1-diphosphate: step 7/9. This chain is Histidinol-phosphate aminotransferase, found in Geobacillus sp. (strain WCH70).